Here is a 257-residue protein sequence, read N- to C-terminus: Imidazole glycerol phosphate synthase subunit HisF (257 aa).

Residues D12 and D131 contribute to the active site.

This sequence belongs to the HisA/HisF family. Heterodimer of HisH and HisF.

It is found in the cytoplasm. The enzyme catalyses 5-[(5-phospho-1-deoxy-D-ribulos-1-ylimino)methylamino]-1-(5-phospho-beta-D-ribosyl)imidazole-4-carboxamide + L-glutamine = D-erythro-1-(imidazol-4-yl)glycerol 3-phosphate + 5-amino-1-(5-phospho-beta-D-ribosyl)imidazole-4-carboxamide + L-glutamate + H(+). It functions in the pathway amino-acid biosynthesis; L-histidine biosynthesis; L-histidine from 5-phospho-alpha-D-ribose 1-diphosphate: step 5/9. Functionally, IGPS catalyzes the conversion of PRFAR and glutamine to IGP, AICAR and glutamate. The HisF subunit catalyzes the cyclization activity that produces IGP and AICAR from PRFAR using the ammonia provided by the HisH subunit. This is Imidazole glycerol phosphate synthase subunit HisF from Teredinibacter turnerae (strain ATCC 39867 / T7901).